The sequence spans 98 residues: MQFFTTVVLFAAAAMALPGGQQSRPYDPCPNNLLSVPQCCDTDALGLVGLGCVAPPNNRPASPRAFADCCHASSRRPKCCAVTTGLEASVLCDDPAGF.

The first 16 residues, Met1–Ala16, serve as a signal peptide directing secretion. 4 disulfide bridges follow: Cys29–Cys79, Cys39–Cys70, Cys40–Cys52, and Cys80–Cys92.

Belongs to the cerato-ulmin hydrophobin family. Homodimer. Homodimers further self-assemble to form highly ordered films at water-air interfaces through intermolecular interactions. In terms of tissue distribution, expressed in mycelium, conidiating mycelium and aerial hyphae.

It is found in the secreted. It localises to the cell wall. Functionally, aerial growth, conidiation, and dispersal of filamentous fungi in the environment rely upon a capability of their secreting small amphipathic proteins called hydrophobins (HPBs) with low sequence identity. Class I can self-assemble into an outermost layer of rodlet bundles on aerial cell surfaces, conferring cellular hydrophobicity that supports fungal growth, development and dispersal; whereas Class II form highly ordered films at water-air interfaces through intermolecular interactions but contribute nothing to the rodlet structure. Hyd1 is a class II hydrophobin that plays probably a role during conidiophore development and in intraspecific signaling or hyphal fusion. Hyd1 and Hyd3 are jointly required for conidial hydrophobicity and dispersal, but seem not to be involved in mycelia hydrophobicity. Inhibits conidial germination in environments not suitable for mycelial growth. Not necessary for root adhesion and colonization. This Bionectria ochroleuca (Gliocladium roseum) protein is Class II hydrophobin 1.